The following is a 598-amino-acid chain: Elongation factor 4 (598 aa).

The region spanning 3–185 is the tr-type G domain; it reads QHIRNFSIIA…MIVARIPPPE (183 aa). Residues 15 to 20 and 132 to 135 contribute to the GTP site; these read DHGKST and NKID.

This sequence belongs to the TRAFAC class translation factor GTPase superfamily. Classic translation factor GTPase family. LepA subfamily.

The protein resides in the cell inner membrane. It catalyses the reaction GTP + H2O = GDP + phosphate + H(+). Functionally, required for accurate and efficient protein synthesis under certain stress conditions. May act as a fidelity factor of the translation reaction, by catalyzing a one-codon backward translocation of tRNAs on improperly translocated ribosomes. Back-translocation proceeds from a post-translocation (POST) complex to a pre-translocation (PRE) complex, thus giving elongation factor G a second chance to translocate the tRNAs correctly. Binds to ribosomes in a GTP-dependent manner. The polypeptide is Elongation factor 4 (Nitrosomonas eutropha (strain DSM 101675 / C91 / Nm57)).